A 199-amino-acid chain; its full sequence is Recombination protein RecR (199 aa).

The C4-type zinc finger occupies 57–72 (CEKCNNFTEEVVCELC). The Toprim domain maps to 80-175 (ALLCVVEMPA…KITRIARGLP (96 aa)).

It belongs to the RecR family.

May play a role in DNA repair. It seems to be involved in an RecBC-independent recombinational process of DNA repair. It may act with RecF and RecO. The sequence is that of Recombination protein RecR from Nitrosospira multiformis (strain ATCC 25196 / NCIMB 11849 / C 71).